A 696-amino-acid chain; its full sequence is Catalase (696 aa).

Catalysis depends on residues H64 and N137. Residues 187–211 (SLAQGSQISSERGSPKAYSNTEPNK) form a disordered region. A compositionally biased stretch (polar residues) spans 189–208 (AQGSQISSERGSPKAYSNTE). A heme-binding site is contributed by Y353.

It belongs to the catalase family. The cofactor is heme.

It catalyses the reaction 2 H2O2 = O2 + 2 H2O. Occurs in almost all aerobically respiring organisms and serves to protect cells from the toxic effects of hydrogen peroxide. In Penicillium janthinellum (Penicillium vitale), this protein is Catalase.